The primary structure comprises 477 residues: PTS system glucose-specific EIICB component (477 aa).

Residues 1 to 14 (MFKNAFANLQKVGK) lie on the Cytoplasmic side of the membrane. The PTS EIIC type-1 domain maps to 1-388 (MFKNAFANLQ…LDLKTPGRED (388 aa)). The chain crosses the membrane as a helical span at residues 15–35 (SLMLPVSVLPIAGILLGVGSA). At 36–50 (NFSWLPAVVSHVMAE) the chain is on the periplasmic side. The chain crosses the membrane as a helical span at residues 51–71 (AGGSVFANMPLIFAIGVALGF). The Cytoplasmic segment spans residues 72–79 (TNNDGVSA). A helical membrane pass occupies residues 80–100 (LAAVVAYGIMVKTMAVVAPLV). The Periplasmic segment spans residues 101–111 (LHLPAEEIAAK). A helical membrane pass occupies residues 112-132 (HLADTGVLGGIISGAIAAYMF). At 133–151 (NRFYRIKLPEYLGFFAGKR) the chain is on the cytoplasmic side. A helical membrane pass occupies residues 152-172 (FVPIISGLAAIFTGVVLSFVW). Residues 173–190 (PPIGTAIQAFSQWAAYQN) lie on the Periplasmic side of the membrane. The helical transmembrane segment at 191-211 (PVVAFGIYGFIERCLVPFGLH) threads the bilayer. Topologically, residues 212 to 248 (HIWNVPFQMQIGEYTNAAGQVFHGDIPRYMAGDPTAG) are cytoplasmic. A helical membrane pass occupies residues 249–269 (MLSGGFLFKMYGLPAAAIAIW). Topologically, residues 270–279 (HSAKPENRAK) are periplasmic. The chain crosses the membrane as a helical span at residues 280 to 300 (VGGIMISAALTSFLTGITEPI). The Cytoplasmic portion of the chain corresponds to 301-309 (EFSFMFVAP). A helical transmembrane segment spans residues 310 to 330 (ILYIIHAILAGLAFPICILLG). Residues 331–355 (MRDGTSFSHGLIDFIVLSGNSSKLW) lie on the Periplasmic side of the membrane. Residues 356-376 (LFPIVGAGYAIVYYTVFRVLI) traverse the membrane as a helical segment. Topologically, residues 377-477 (KALDLKTPGR…TEMDEYIRNS (101 aa)) are cytoplasmic. Residues 399 to 477 (SEMAPALVAA…TEMDEYIRNS (79 aa)) form the PTS EIIB type-1 domain. The active-site Phosphocysteine intermediate; for EIIB activity is Cys-421. Cys-421 carries the post-translational modification Phosphocysteine.

The protein localises to the cell inner membrane. It carries out the reaction N(pros)-phospho-L-histidyl-[protein] + D-glucose(out) = D-glucose 6-phosphate(in) + L-histidyl-[protein]. Functionally, the phosphoenolpyruvate-dependent sugar phosphotransferase system (sugar PTS), a major carbohydrate active transport system, catalyzes the phosphorylation of incoming sugar substrates concomitantly with their translocation across the cell membrane. The enzyme II complex composed of PtsG and Crr is involved in glucose transport. Also functions as a chemoreceptor monitoring the environment for changes in sugar concentration. It can also phosphorylate mannose, methyl alpha-glucoside and 2-deoxy-glucose. In Salmonella typhimurium (strain LT2 / SGSC1412 / ATCC 700720), this protein is PTS system glucose-specific EIICB component (ptsG).